Consider the following 30-residue polypeptide: Snake venom serine protease (30 aa).

A Peptidase S1 domain is found at 1–30 (VIGGDECNINEHRFLVALYDPDGFLSGGIL).

The protein belongs to the peptidase S1 family. Snake venom subfamily. In terms of assembly, monomer. In terms of processing, N-Glycosylated. Expressed by the venom gland.

It localises to the secreted. Inhibited by diisopropylfluorophosphate (DFP). In terms of biological role, snake venom serine protease that catalyzes the hydrolysis of arginine esters, kallikrein substrates Pro-Phe-Arg-MCA and Z-Phe-Arg-MCA. Cleaves kininogen analogs to release bradykinin. Induces contraction of the isolated rat uterus directly at high concentrations, but provokes more forceful contractions when injected in presence of bovine plasma. Shows capillary permeability-increasing activity and hypotensive activity on the anesthetized rat. The chain is Snake venom serine protease from Crotalus viridis viridis (Prairie rattlesnake).